The following is a 687-amino-acid chain: Immune inhibitor A (687 aa).

Over residues 1–12 (MKDAKADTKEKL) the composition is skewed to basic and acidic residues. The or 32 signal peptide spans 1–25 (MKDAKADTKEKLNQPATGTPAATGP). The disordered stretch occupies residues 1–43 (MKDAKADTKEKLNQPATGTPAATGPVKGGLNGKVPTSPAKQKA). A propeptide spanning residues 26–40 (VKGGLNGKVPTSPAK) is cleaved from the precursor. A Zn(2+)-binding site is contributed by H266. Residue E267 is part of the active site. Zn(2+) is bound at residue H270.

The protein belongs to the peptidase M6 family. Zn(2+) serves as cofactor. Requires Ca(2+) as cofactor.

The protein localises to the secreted. Functionally, neutral metalloprotease that is secreted to degrade antibacterial proteins produced by the insect host for its defense (attacins and cecropins). Probably degrades some unknown crucial protein(s) too, since it is toxic when injected to insect larvae. The protein is Immune inhibitor A (ina) of Bacillus thuringiensis subsp. alesti.